A 69-amino-acid polypeptide reads, in one-letter code: Toxin Lc b (69 aa).

Disulfide bonds link Cys-3/Cys-20, Cys-13/Cys-41, Cys-45/Cys-56, and Cys-57/Cys-62.

The protein belongs to the three-finger toxin family. Long-chain subfamily. Type II alpha-neurotoxin sub-subfamily. Expressed by the venom gland.

The protein resides in the secreted. Binds with high affinity to muscular nicotinic acetylcholine receptors (nAChRs), whereas it binds with a low affinity to neuronal alpha-7/CHRNA7 nAChRs. This is Toxin Lc b from Laticauda colubrina (Yellow-lipped sea krait).